The following is a 182-amino-acid chain: UPF0301 protein NMCC_1249 (182 aa).

The protein belongs to the UPF0301 (AlgH) family.

The polypeptide is UPF0301 protein NMCC_1249 (Neisseria meningitidis serogroup C (strain 053442)).